A 452-amino-acid chain; its full sequence is GTPase Der (452 aa).

EngA-type G domains lie at 4-169 (PIVA…PTTE) and 177-352 (IKVA…ASHR). GTP contacts are provided by residues 10-17 (GRPNVGKS), 57-61 (DTGGL), 120-123 (NKCE), 183-190 (GRPNVGKS), 230-234 (DTAGI), and 295-298 (NKWD). One can recognise a KH-like domain in the interval 353 to 438 (RRVSTAVINE…PIRLIWRGKS (86 aa)).

Belongs to the TRAFAC class TrmE-Era-EngA-EngB-Septin-like GTPase superfamily. EngA (Der) GTPase family. Associates with the 50S ribosomal subunit.

GTPase that plays an essential role in the late steps of ribosome biogenesis. In Gloeothece citriformis (strain PCC 7424) (Cyanothece sp. (strain PCC 7424)), this protein is GTPase Der.